A 56-amino-acid polypeptide reads, in one-letter code: MKTTRKGLRDGELEKDTYGRLTCSECGESLKKKNDPDEVFSVRICADCGREWKELR.

Zn(2+) contacts are provided by Cys-23, Cys-26, Cys-45, and Cys-48. 2 short sequence motifs (c(P)XCG motif) span residues 23-27 and 45-49; these read CSECG and CADCG.

In terms of assembly, monomer.

Functionally, zinc-binding protein that binds one zinc ion. Is involved in biofilm formation, swarming and glycerol metabolism regulation. The polypeptide is Zinc finger mu-protein HVO_0758 (Haloferax volcanii (strain ATCC 29605 / DSM 3757 / JCM 8879 / NBRC 14742 / NCIMB 2012 / VKM B-1768 / DS2) (Halobacterium volcanii)).